A 459-amino-acid polypeptide reads, in one-letter code: Hemopexin (459 aa).

An N-terminal signal peptide occupies residues 1–23 (MARALRVPVALWLLGLCWSLAKA). 3 disulfides stabilise this stretch: Cys-52–Cys-232, Cys-150–Cys-155, and Cys-189–Cys-201. Hemopexin repeat units follow at residues 55 to 95 (GWGF…WKDA), 96 to 140 (PSPV…FPGI), 141 to 185 (PFPL…SWPA), and 186 to 232 (VGNC…FMSC). His-81 contacts heme. His-151 contacts heme. Asn-188 carries N-linked (GlcNAc...) asparagine glycosylation. An N-linked (GlcNAc...) asparagine glycan is attached at Asn-218. His-237 lines the heme pocket. Asn-241 is a glycosylation site (N-linked (GlcNAc...) asparagine). 3 disulfides stabilise this stretch: Cys-250-Cys-453, Cys-359-Cys-401, and Cys-411-Cys-428. Hemopexin repeat units lie at residues 252–297 (PHLV…WPQG), 298–345 (PSTV…FGSP), 350–389 (LHSV…WTEL), and 393–444 (HTKV…LPQA). His-286 serves as a coordination point for heme.

The protein belongs to the hemopexin family.

The protein localises to the secreted. Functionally, binds heme and transports it to the liver for breakdown and iron recovery, after which the free hemopexin returns to the circulation. The polypeptide is Hemopexin (HPX) (Bos taurus (Bovine)).